The following is an 833-amino-acid chain: Leucine--tRNA ligase (833 aa).

Positions Pro-41–His-52 match the 'HIGH' region motif. The 'KMSKS' region signature appears at Lys-610–Ser-614. An ATP-binding site is contributed by Lys-613.

This sequence belongs to the class-I aminoacyl-tRNA synthetase family.

The protein resides in the cytoplasm. The enzyme catalyses tRNA(Leu) + L-leucine + ATP = L-leucyl-tRNA(Leu) + AMP + diphosphate. In Streptococcus pyogenes serotype M5 (strain Manfredo), this protein is Leucine--tRNA ligase.